The primary structure comprises 246 residues: Pyridoxine 5'-phosphate synthase (246 aa).

Position 9 (Asn-9) interacts with 3-amino-2-oxopropyl phosphate. Position 11–12 (11–12 (DH)) interacts with 1-deoxy-D-xylulose 5-phosphate. Arg-20 is a 3-amino-2-oxopropyl phosphate binding site. His-45 serves as the catalytic Proton acceptor. 1-deoxy-D-xylulose 5-phosphate is bound by residues Arg-47 and His-52. The Proton acceptor role is filled by Glu-72. Position 102 (Thr-102) interacts with 1-deoxy-D-xylulose 5-phosphate. The active-site Proton donor is the His-193. Residues Gly-194 and 215–216 (GH) each bind 3-amino-2-oxopropyl phosphate.

It belongs to the PNP synthase family. As to quaternary structure, homooctamer; tetramer of dimers.

It is found in the cytoplasm. The catalysed reaction is 3-amino-2-oxopropyl phosphate + 1-deoxy-D-xylulose 5-phosphate = pyridoxine 5'-phosphate + phosphate + 2 H2O + H(+). It participates in cofactor biosynthesis; pyridoxine 5'-phosphate biosynthesis; pyridoxine 5'-phosphate from D-erythrose 4-phosphate: step 5/5. Functionally, catalyzes the complicated ring closure reaction between the two acyclic compounds 1-deoxy-D-xylulose-5-phosphate (DXP) and 3-amino-2-oxopropyl phosphate (1-amino-acetone-3-phosphate or AAP) to form pyridoxine 5'-phosphate (PNP) and inorganic phosphate. The protein is Pyridoxine 5'-phosphate synthase of Colwellia psychrerythraea (strain 34H / ATCC BAA-681) (Vibrio psychroerythus).